A 398-amino-acid chain; its full sequence is MYLVESKGGAIACMLLALLSLGTWPAVLTLLERRGRLPQHTYLDYSITNLLAAIIIAFTFGQIGSTKPDSPNFITQLAQDNWPSVMFAMAGGIVLSLGNLSTQYAWALVGLSVTEVITSSITVVIGSTLNYFLDDKINKAEILFPGVACFLIAVCLGSAVHRSNADDNKAKLRDFETAKQEASGPSTEIGTNSSKDLETNVTTKPKEGTARFLIELENTRAIKVFGKRKIIGLAITFFAGLCFSLFSPAFNLATNDQWNRLKQGVPKLVVYTAFFYFSVSCFIIALILNVVFLYYPVLGLPKSSFKAYLNDWNGRYWAFLAGFLCGFGNGLQFMGGQAAGYAAADSVQALPLVSTFWGVVLFGEYRRSSRKTYLLLFCMLFMFISAVAVLMASSGHRK.

Topologically, residues 1 to 10 are extracellular; the sequence is MYLVESKGGA. A helical membrane pass occupies residues 11 to 31; that stretch reads IACMLLALLSLGTWPAVLTLL. The Cytoplasmic portion of the chain corresponds to 32–44; sequence ERRGRLPQHTYLD. The helical transmembrane segment at 45–65 threads the bilayer; it reads YSITNLLAAIIIAFTFGQIGS. Residues 66-81 are Extracellular-facing; sequence TKPDSPNFITQLAQDN. The helical transmembrane segment at 82 to 102 threads the bilayer; that stretch reads WPSVMFAMAGGIVLSLGNLST. Residues 103-104 are Cytoplasmic-facing; it reads QY. A helical membrane pass occupies residues 105–125; it reads AWALVGLSVTEVITSSITVVI. At 126–139 the chain is on the extracellular side; sequence GSTLNYFLDDKINK. Residues 140 to 160 form a helical membrane-spanning segment; that stretch reads AEILFPGVACFLIAVCLGSAV. At 161-229 the chain is on the cytoplasmic side; sequence HRSNADDNKA…RAIKVFGKRK (69 aa). Residues 176-200 form a disordered region; it reads ETAKQEASGPSTEIGTNSSKDLETN. Residues 183 to 200 are compositionally biased toward polar residues; the sequence is SGPSTEIGTNSSKDLETN. 221–228 lines the ATP pocket; the sequence is AIKVFGKR. A helical transmembrane segment spans residues 230–250; sequence IIGLAITFFAGLCFSLFSPAF. Residues 251–272 lie on the Extracellular side of the membrane; that stretch reads NLATNDQWNRLKQGVPKLVVYT. A helical transmembrane segment spans residues 273-293; sequence AFFYFSVSCFIIALILNVVFL. The Cytoplasmic portion of the chain corresponds to 294–315; sequence YYPVLGLPKSSFKAYLNDWNGR. Residues 316-336 form a helical membrane-spanning segment; that stretch reads YWAFLAGFLCGFGNGLQFMGG. Topologically, residues 337–341 are extracellular; that stretch reads QAAGY. A helical membrane pass occupies residues 342 to 362; sequence AAADSVQALPLVSTFWGVVLF. Topologically, residues 363–371 are cytoplasmic; the sequence is GEYRRSSRK. Residues 372 to 392 form a helical membrane-spanning segment; sequence TYLLLFCMLFMFISAVAVLMA. Residues 393–398 are Extracellular-facing; sequence SSGHRK.

It belongs to the plant ureide permease (TC 2.A.7.19) family. In terms of tissue distribution, expressed in root xylem, cotyledons and leaves. Expressed in leaf blades, petioles, trichomes, stems, flower stigma, the upper part of pedicels, sepals, and the top and bottom parts of carpels in siliques.

The protein resides in the membrane. Functionally, proton-coupled transporter that transports a wide spectrum of oxo derivatives of heterocyclic nitrogen compounds, including allantoin, uric acid and xanthine, but not adenine. Mediates high affinity transport of uracil and 5-fluorouracil (a toxic uracil analog). Mediates transport of free pyrimidines and may function during early seedling development in salvage pathways, by the utilization of pyrimidines from seed storage tissue. The protein is Ureide permease 2 of Arabidopsis thaliana (Mouse-ear cress).